The chain runs to 379 residues: Homoserine O-acetyltransferase (379 aa).

The region spanning 54-332 (NAILVCHALS…PYQSEEIVKS (279 aa)) is the AB hydrolase-1 domain. S159 functions as the Nucleophile in the catalytic mechanism. R228 lines the substrate pocket. Active-site residues include D318 and H352. Residue D353 coordinates substrate.

Belongs to the AB hydrolase superfamily. MetX family. As to quaternary structure, homodimer.

Its subcellular location is the cytoplasm. It catalyses the reaction L-homoserine + acetyl-CoA = O-acetyl-L-homoserine + CoA. The protein operates within amino-acid biosynthesis; L-methionine biosynthesis via de novo pathway; O-acetyl-L-homoserine from L-homoserine: step 1/1. Its function is as follows. Transfers an acetyl group from acetyl-CoA to L-homoserine, forming acetyl-L-homoserine. The sequence is that of Homoserine O-acetyltransferase from Leptospira meyeri.